A 343-amino-acid chain; its full sequence is tRNA N6-adenosine threonylcarbamoyltransferase (343 aa).

Positions 115 and 119 each coordinate Fe cation. Substrate is bound by residues 138–142 (LVSGA), Asp-171, Gly-184, and Asn-276. Asp-304 lines the Fe cation pocket.

Belongs to the KAE1 / TsaD family. Requires Fe(2+) as cofactor.

Its subcellular location is the cytoplasm. The enzyme catalyses L-threonylcarbamoyladenylate + adenosine(37) in tRNA = N(6)-L-threonylcarbamoyladenosine(37) in tRNA + AMP + H(+). Its function is as follows. Required for the formation of a threonylcarbamoyl group on adenosine at position 37 (t(6)A37) in tRNAs that read codons beginning with adenine. Is involved in the transfer of the threonylcarbamoyl moiety of threonylcarbamoyl-AMP (TC-AMP) to the N6 group of A37, together with TsaE and TsaB. TsaD likely plays a direct catalytic role in this reaction. This chain is tRNA N6-adenosine threonylcarbamoyltransferase, found in Buchnera aphidicola subsp. Cinara cedri (strain Cc).